Consider the following 56-residue polypeptide: Small ribosomal subunit protein uS14 (56 aa).

Zn(2+) is bound by residues cysteine 21, cysteine 24, cysteine 39, and cysteine 42.

The protein belongs to the universal ribosomal protein uS14 family. In terms of assembly, component of the 40S small ribosomal subunit. Zn(2+) serves as cofactor.

The protein resides in the cytoplasm. It localises to the cytosol. The protein localises to the rough endoplasmic reticulum. This Spodoptera frugiperda (Fall armyworm) protein is Small ribosomal subunit protein uS14 (RpS29).